We begin with the raw amino-acid sequence, 641 residues long: Macrolide export ATP-binding/permease protein MacB (641 aa).

The region spanning 2–240 is the ABC transporter domain; sequence IKLENIKKSF…LKQNLKEIKP (239 aa). Residue 38–45 participates in ATP binding; the sequence is GQSGSGKS. A run of 4 helical transmembrane segments spans residues 268–288, 516–536, 565–585, and 601–621; these read FLTM…VALA, LLIS…VMNI, FLIE…GLAY, and IFST…GIVF.

It belongs to the ABC transporter superfamily. Macrolide exporter (TC 3.A.1.122) family. In terms of assembly, homodimer.

Its subcellular location is the cell inner membrane. In terms of biological role, non-canonical ABC transporter that contains transmembrane domains (TMD), which form a pore in the inner membrane, and an ATP-binding domain (NBD), which is responsible for energy generation. Confers resistance against macrolides. The protein is Macrolide export ATP-binding/permease protein MacB of Campylobacter fetus subsp. fetus (strain 82-40).